The following is a 406-amino-acid chain: 5-cytosine rRNA methyltransferase NSUN4 (406 aa).

Positions 207, 208, 209, 226, 231, 259, 260, and 277 each coordinate S-adenosyl-L-methionine. Cys-332 functions as the Nucleophile in the catalytic mechanism.

This sequence belongs to the class I-like SAM-binding methyltransferase superfamily. RsmB/NOP family.

Its subcellular location is the mitochondrion. It catalyses the reaction a cytidine in rRNA + S-adenosyl-L-methionine = a 5-methylcytidine in rRNA + S-adenosyl-L-homocysteine + H(+). The catalysed reaction is a cytidine in mRNA + S-adenosyl-L-methionine = a 5-methylcytidine in mRNA + S-adenosyl-L-homocysteine + H(+). Functionally, mitochondrial RNA cytosine C(5)-methyltransferase that methylates cytosine to 5-methylcytosine (m5C) in various RNAs, such as rRNAs, mRNAs and some long non-coding RNAs (lncRNAs). Involved in mitochondrial ribosome small subunit (SSU) maturation by catalyzing methylation of mitochondrial 12S rRNA. The sequence is that of 5-cytosine rRNA methyltransferase NSUN4 (nsun4) from Xenopus laevis (African clawed frog).